The primary structure comprises 349 residues: Phosphoribosylformylglycinamidine cyclo-ligase (349 aa).

The protein belongs to the AIR synthase family.

It is found in the cytoplasm. It catalyses the reaction 2-formamido-N(1)-(5-O-phospho-beta-D-ribosyl)acetamidine + ATP = 5-amino-1-(5-phospho-beta-D-ribosyl)imidazole + ADP + phosphate + H(+). The protein operates within purine metabolism; IMP biosynthesis via de novo pathway; 5-amino-1-(5-phospho-D-ribosyl)imidazole from N(2)-formyl-N(1)-(5-phospho-D-ribosyl)glycinamide: step 2/2. This chain is Phosphoribosylformylglycinamidine cyclo-ligase, found in Lactobacillus delbrueckii subsp. bulgaricus (strain ATCC 11842 / DSM 20081 / BCRC 10696 / JCM 1002 / NBRC 13953 / NCIMB 11778 / NCTC 12712 / WDCM 00102 / Lb 14).